Consider the following 261-residue polypeptide: Indole-3-glycerol phosphate synthase (261 aa).

The protein belongs to the TrpC family.

It carries out the reaction 1-(2-carboxyphenylamino)-1-deoxy-D-ribulose 5-phosphate + H(+) = (1S,2R)-1-C-(indol-3-yl)glycerol 3-phosphate + CO2 + H2O. Its pathway is amino-acid biosynthesis; L-tryptophan biosynthesis; L-tryptophan from chorismate: step 4/5. This Burkholderia cenocepacia (strain HI2424) protein is Indole-3-glycerol phosphate synthase.